The following is an 891-amino-acid chain: 26S proteasome non-ATPase regulatory subunit 2 homolog A (891 aa).

Residues 1–44 (MAPTQDPNSVGGGAKKDEATLKVPSKDPKKKDEKKDEDLSEEDL) form a disordered region. Residues 14 to 21 (AKKDEATL) carry the Nuclear localization signal motif. Over residues 14–37 (AKKDEATLKVPSKDPKKKDEKKDE) the composition is skewed to basic and acidic residues. Lysine 218 is covalently cross-linked (Glycyl lysine isopeptide (Lys-Gly) (interchain with G-Cter in ubiquitin)). O-acetylthreonine is present on threonine 219. PC repeat units follow at residues 414–447 (SAAA…PIIA), 448–484 (GALL…SVRI), 485–519 (GAIM…PLDV), 522–556 (FASL…AELG), 565–594 (LGLG…KIRK), 674–705 (LALG…EVAM), and 724–739 (AGML…KDMS).

This sequence belongs to the proteasome subunit S2 family. As to quaternary structure, component of the 19S regulatory particle (RP/PA700) base subcomplex of the 26S proteasome. The 26S proteasome is composed of a core protease (CP), known as the 20S proteasome, capped at one or both ends by the 19S regulatory particle (RP/PA700). The RP/PA700 complex is composed of at least 17 different subunits in two subcomplexes, the base and the lid, which form the portions proximal and distal to the 20S proteolytic core, respectively. Interacts with JMJ27. In terms of tissue distribution, expressed in stems, leaves, buds, flowers, siliques and developing seeds.

It is found in the nucleus. Its subcellular location is the cytoplasm. In terms of biological role, acts as a regulatory subunit of the 26 proteasome which is involved in the ATP-dependent degradation of ubiquitinated proteins. Required during embryogenesis. Required for optimal plant growth and stress responses. Required for innate immunity. Prevents JMJ27 accumulation in non-drought conditions. The chain is 26S proteasome non-ATPase regulatory subunit 2 homolog A from Arabidopsis thaliana (Mouse-ear cress).